The primary structure comprises 333 residues: Probable pyridoxal reductase 2 (333 aa).

Catalysis depends on tyrosine 52, which acts as the Proton donor.

This sequence belongs to the aldo/keto reductase family.

The protein resides in the cytoplasm. The catalysed reaction is pyridoxine + NADP(+) = pyridoxal + NADPH + H(+). In terms of biological role, catalyzes the reduction of pyridoxal (PL) with NADPH and oxidation of pyridoxine (PN) with NADP(+). This is Probable pyridoxal reductase 2 from Schizosaccharomyces pombe (strain 972 / ATCC 24843) (Fission yeast).